Here is a 476-residue protein sequence, read N- to C-terminus: Bifunctional protein HldE (476 aa).

Residues 1–318 (MKVTLPEFER…ENAVRGRADT (318 aa)) are ribokinase. 195 to 198 (NLSE) contacts ATP. Residue Asp264 is part of the active site. Residues 344–476 (MTNGVFDILH…IIKKIQKDSQ (133 aa)) are cytidylyltransferase.

It in the N-terminal section; belongs to the carbohydrate kinase PfkB family. The protein in the C-terminal section; belongs to the cytidylyltransferase family. In terms of assembly, homodimer.

The catalysed reaction is D-glycero-beta-D-manno-heptose 7-phosphate + ATP = D-glycero-beta-D-manno-heptose 1,7-bisphosphate + ADP + H(+). It carries out the reaction D-glycero-beta-D-manno-heptose 1-phosphate + ATP + H(+) = ADP-D-glycero-beta-D-manno-heptose + diphosphate. It functions in the pathway nucleotide-sugar biosynthesis; ADP-L-glycero-beta-D-manno-heptose biosynthesis; ADP-L-glycero-beta-D-manno-heptose from D-glycero-beta-D-manno-heptose 7-phosphate: step 1/4. The protein operates within nucleotide-sugar biosynthesis; ADP-L-glycero-beta-D-manno-heptose biosynthesis; ADP-L-glycero-beta-D-manno-heptose from D-glycero-beta-D-manno-heptose 7-phosphate: step 3/4. Catalyzes the phosphorylation of D-glycero-D-manno-heptose 7-phosphate at the C-1 position to selectively form D-glycero-beta-D-manno-heptose-1,7-bisphosphate. In terms of biological role, catalyzes the ADP transfer from ATP to D-glycero-beta-D-manno-heptose 1-phosphate, yielding ADP-D-glycero-beta-D-manno-heptose. This Enterobacter sp. (strain 638) protein is Bifunctional protein HldE.